Reading from the N-terminus, the 630-residue chain is tRNA uridine 5-carboxymethylaminomethyl modification enzyme MnmG (630 aa).

FAD is bound by residues 13 to 18, Val-125, and Ser-180; that span reads GGGHAG. 273 to 287 lines the NAD(+) pocket; that stretch reads GPRYCPSIEDKIHRF. Gln-370 contributes to the FAD binding site.

Belongs to the MnmG family. In terms of assembly, homodimer. Heterotetramer of two MnmE and two MnmG subunits. FAD is required as a cofactor.

It localises to the cytoplasm. Functionally, NAD-binding protein involved in the addition of a carboxymethylaminomethyl (cmnm) group at the wobble position (U34) of certain tRNAs, forming tRNA-cmnm(5)s(2)U34. This chain is tRNA uridine 5-carboxymethylaminomethyl modification enzyme MnmG, found in Shewanella woodyi (strain ATCC 51908 / MS32).